The sequence spans 143 residues: MQPQLSRPQTATNQVRNSVSGPWSGNAAHKAEKYFITSAKRDRNDKLQIEIMPSSGRRKLSPTPEMIPKLIDGEIEIYVLTTQPDIAIDLGKQVIDMENRYVIDFDKRGVKWTMRDIPVFYREGKGLCVELDNRIYTLNEFFK.

Positions 1–23 (MQPQLSRPQTATNQVRNSVSGPW) are enriched in polar residues. Residues 1-25 (MQPQLSRPQTATNQVRNSVSGPWSG) form a disordered region.

Component of the P840 reaction center.

In Chlorobaculum thiosulfatiphilum (Chlorobium limicola f.sp. thiosulfatophilum), this protein is P840 reaction center 17 kDa protein (pscD).